A 449-amino-acid polypeptide reads, in one-letter code: UDP-N-acetylmuramoylalanine--D-glutamate ligase (449 aa).

119-125 (GTNGKTT) lines the ATP pocket.

Belongs to the MurCDEF family.

Its subcellular location is the cytoplasm. The catalysed reaction is UDP-N-acetyl-alpha-D-muramoyl-L-alanine + D-glutamate + ATP = UDP-N-acetyl-alpha-D-muramoyl-L-alanyl-D-glutamate + ADP + phosphate + H(+). It functions in the pathway cell wall biogenesis; peptidoglycan biosynthesis. Cell wall formation. Catalyzes the addition of glutamate to the nucleotide precursor UDP-N-acetylmuramoyl-L-alanine (UMA). The polypeptide is UDP-N-acetylmuramoylalanine--D-glutamate ligase (Lactococcus lactis subsp. cremoris (strain MG1363)).